The following is a 441-amino-acid chain: MRPAVAAALLLVAAAVAASPVSALYSAGSPVLQFNPNNFKSKVLNSNGVVLVEFFAPWCGHCQQLTPIWEKAAGVLKGVATVAALDADAHKELAQEYGIRGFPTIKVFVPGKPPVDYQGARDVKPIVEFALSQVKALLRDRLNGKTSAGSGGKKSGGSSEKTEPSASIELNSQNFDKLVTKSKDLWIVEFFAPWCGHCKKLAPEWKKAAKNLKGQVKLGHVDCDAEKSLMSKYKVEGFPTILVFGADKESPFPYQGARVASAIESFALEQLEANAAPPEVSELTGPDAMEEKCASAAICFVSFLPDILDSKAEGRNKYLELLLSVAEKFKKSPYSFVWTAAGKQADLEKQVGVGGYGYPAMVALNVKKGAYAPLRSAFQLDEITEFVKEAGRGGKGNLPLDGTPTIVQSEPWDGKDGEVIEEDEFSLEELMADNSPVNDEL.

Residues 1-18 (MRPAVAAALLLVAAAVAA) form the signal peptide. 2 Thioredoxin domains span residues 19-139 (SPVS…ALLR) and 159-276 (SEKT…ANAA). Active-site nucleophile residues include Cys59 and Cys62. A disulfide bridge connects residues Cys59 and Cys62. The tract at residues 143 to 166 (NGKTSAGSGGKKSGGSSEKTEPSA) is disordered. Active-site nucleophile residues include Cys195 and Cys198. A disulfide bridge links Cys195 with Cys198.

Belongs to the protein disulfide isomerase family.

The protein localises to the endoplasmic reticulum lumen. It carries out the reaction Catalyzes the rearrangement of -S-S- bonds in proteins.. Acts as a protein-folding catalyst that interacts with nascent polypeptides to catalyze the formation, isomerization, and reduction or oxidation of disulfide bonds. May play a role in storage protein biogenesis. The sequence is that of Protein disulfide isomerase-like 2-3 (PDIL2-3) from Oryza sativa subsp. japonica (Rice).